The following is a 92-amino-acid chain: Small ribosomal subunit protein uS19 (92 aa).

It belongs to the universal ribosomal protein uS19 family.

Functionally, protein S19 forms a complex with S13 that binds strongly to the 16S ribosomal RNA. This Ruegeria pomeroyi (strain ATCC 700808 / DSM 15171 / DSS-3) (Silicibacter pomeroyi) protein is Small ribosomal subunit protein uS19.